Reading from the N-terminus, the 194-residue chain is Small ribosomal subunit protein uS11m (194 aa).

It belongs to the universal ribosomal protein uS11 family. As to quaternary structure, component of the mitochondrial small ribosomal subunit (mt-SSU). Mature mammalian 55S mitochondrial ribosomes consist of a small (28S) and a large (39S) subunit. The 28S small subunit contains a 12S ribosomal RNA (12S mt-rRNA) and 30 different proteins. The 39S large subunit contains a 16S rRNA (16S mt-rRNA), a copy of mitochondrial valine transfer RNA (mt-tRNA(Val)), which plays an integral structural role, and 52 different proteins.

It is found in the mitochondrion. This is Small ribosomal subunit protein uS11m (MRPS11) from Homo sapiens (Human).